A 227-amino-acid chain; its full sequence is Cytochrome c oxidase subunit 2 (227 aa).

The Mitochondrial intermembrane segment spans residues 1 to 14; sequence MAHPVQLGLQDATS. Residues 15-45 traverse the membrane as a helical segment; that stretch reads PVMEELITFHDHALMAMSLISLLVLYALFST. At 46 to 59 the chain is on the mitochondrial matrix side; that stretch reads LTTKLTNTNITDAQ. Residues 60-87 form a helical membrane-spanning segment; it reads EMEIIWTILPAIILVLIALPSLRILYLT. The Mitochondrial intermembrane segment spans residues 88–227; it reads DEVNNPSFTI…IFEMGPVFTL (140 aa). Cu cation contacts are provided by His161, Cys196, Glu198, Cys200, His204, and Met207. Glu198 is a Mg(2+) binding site.

The protein belongs to the cytochrome c oxidase subunit 2 family. In terms of assembly, component of the cytochrome c oxidase (complex IV, CIV), a multisubunit enzyme composed of 14 subunits. The complex is composed of a catalytic core of 3 subunits MT-CO1, MT-CO2 and MT-CO3, encoded in the mitochondrial DNA, and 11 supernumerary subunits COX4I, COX5A, COX5B, COX6A, COX6B, COX6C, COX7A, COX7B, COX7C, COX8 and NDUFA4, which are encoded in the nuclear genome. The complex exists as a monomer or a dimer and forms supercomplexes (SCs) in the inner mitochondrial membrane with NADH-ubiquinone oxidoreductase (complex I, CI) and ubiquinol-cytochrome c oxidoreductase (cytochrome b-c1 complex, complex III, CIII), resulting in different assemblies (supercomplex SCI(1)III(2)IV(1) and megacomplex MCI(2)III(2)IV(2)). Found in a complex with TMEM177, COA6, COX18, COX20, SCO1 and SCO2. Interacts with TMEM177 in a COX20-dependent manner. Interacts with COX20. Interacts with COX16. The cofactor is Cu cation.

Its subcellular location is the mitochondrion inner membrane. The catalysed reaction is 4 Fe(II)-[cytochrome c] + O2 + 8 H(+)(in) = 4 Fe(III)-[cytochrome c] + 2 H2O + 4 H(+)(out). Its function is as follows. Component of the cytochrome c oxidase, the last enzyme in the mitochondrial electron transport chain which drives oxidative phosphorylation. The respiratory chain contains 3 multisubunit complexes succinate dehydrogenase (complex II, CII), ubiquinol-cytochrome c oxidoreductase (cytochrome b-c1 complex, complex III, CIII) and cytochrome c oxidase (complex IV, CIV), that cooperate to transfer electrons derived from NADH and succinate to molecular oxygen, creating an electrochemical gradient over the inner membrane that drives transmembrane transport and the ATP synthase. Cytochrome c oxidase is the component of the respiratory chain that catalyzes the reduction of oxygen to water. Electrons originating from reduced cytochrome c in the intermembrane space (IMS) are transferred via the dinuclear copper A center (CU(A)) of subunit 2 and heme A of subunit 1 to the active site in subunit 1, a binuclear center (BNC) formed by heme A3 and copper B (CU(B)). The BNC reduces molecular oxygen to 2 water molecules using 4 electrons from cytochrome c in the IMS and 4 protons from the mitochondrial matrix. In Cercocebus galeritus (Tana river mangabey), this protein is Cytochrome c oxidase subunit 2 (MT-CO2).